Reading from the N-terminus, the 294-residue chain is Elongation factor Ts, mitochondrial 2 (294 aa).

It belongs to the EF-Ts family.

Its subcellular location is the mitochondrion. Its function is as follows. Associates with the EF-Tu.GDP complex and induces the exchange of GDP to GTP. It remains bound to the aminoacyl-tRNA.EF-Tu.GTP complex up to the GTP hydrolysis stage on the ribosome. This chain is Elongation factor Ts, mitochondrial 2, found in Paramecium tetraurelia.